Here is a 354-residue protein sequence, read N- to C-terminus: NADH-quinone oxidoreductase subunit H 2 (354 aa).

8 helical membrane-spanning segments follow: residues 4-24 (IALF…VLLT), 81-101 (ILAP…VPFG), 130-150 (IGLL…ALAG), 170-190 (VSYE…SGSF), 201-221 (GGFW…FIYL), 269-289 (VACI…PGFL), 296-316 (LVPV…YIWV), and 333-353 (WKFL…FVAL).

It belongs to the complex I subunit 1 family. NDH-1 is composed of 14 different subunits. Subunits NuoA, H, J, K, L, M, N constitute the membrane sector of the complex.

It is found in the cell inner membrane. The enzyme catalyses a quinone + NADH + 5 H(+)(in) = a quinol + NAD(+) + 4 H(+)(out). Its function is as follows. NDH-1 shuttles electrons from NADH, via FMN and iron-sulfur (Fe-S) centers, to quinones in the respiratory chain. The immediate electron acceptor for the enzyme in this species is believed to be ubiquinone. Couples the redox reaction to proton translocation (for every two electrons transferred, four hydrogen ions are translocated across the cytoplasmic membrane), and thus conserves the redox energy in a proton gradient. This subunit may bind ubiquinone. The chain is NADH-quinone oxidoreductase subunit H 2 from Koribacter versatilis (strain Ellin345).